A 345-amino-acid chain; its full sequence is Class I histocompatibility antigen, F10 alpha chain (345 aa).

The signal sequence occupies residues 1–22 (MGPCGALGLGLLLAAVCGAAAP). Positions 23-110 (ELHTLRYIQT…ILQRRYNQTG (88 aa)) are alpha-1. Topologically, residues 23-301 (ELHTLRYIQT…WEPPQPNLVP (279 aa)) are extracellular. Asparagine 59 and asparagine 107 each carry an N-linked (GlcNAc...) asparagine glycan. The segment at 111–201 (GSHTVQWMYG…EYGKAELGRR (91 aa)) is alpha-2. 2 cysteine pairs are disulfide-bonded: cysteine 121–cysteine 183 and cysteine 221–cysteine 277. The interval 202-292 (ERPEVRVWGK…SLPQPGLYSW (91 aa)) is alpha-3. The Ig-like C1-type domain occupies 204–293 (PEVRVWGKEA…LPQPGLYSWE (90 aa)). The tract at residues 293–301 (EPPQPNLVP) is connecting peptide. The helical transmembrane segment at 302 to 324 (IVAGVAVAIVAIAIMVGVGFIIY) threads the bilayer. The Cytoplasmic segment spans residues 325-345 (RRHAGKKGKGYNIAPGSNPAI).

This sequence belongs to the MHC class I family. In terms of assembly, heterodimer of an alpha chain and a beta chain (beta-2-microglobulin).

It is found in the membrane. Functionally, involved in the presentation of foreign antigens to the immune system. In Gallus gallus (Chicken), this protein is Class I histocompatibility antigen, F10 alpha chain.